The sequence spans 321 residues: Ribosomal protein L11 methyltransferase (321 aa).

Thr-150, Gly-171, Asp-193, and Asn-256 together coordinate S-adenosyl-L-methionine.

It belongs to the methyltransferase superfamily. PrmA family.

It localises to the cytoplasm. The enzyme catalyses L-lysyl-[protein] + 3 S-adenosyl-L-methionine = N(6),N(6),N(6)-trimethyl-L-lysyl-[protein] + 3 S-adenosyl-L-homocysteine + 3 H(+). Functionally, methylates ribosomal protein L11. The sequence is that of Ribosomal protein L11 methyltransferase from Herpetosiphon aurantiacus (strain ATCC 23779 / DSM 785 / 114-95).